A 436-amino-acid chain; its full sequence is Methanethiol oxidase (436 aa).

The N-terminal stretch at 1 to 24 is a signal peptide; sequence MKRREFGALAAGALAMGLPFRAFA.

This sequence belongs to the selenium-binding protein family.

It is found in the periplasm. It carries out the reaction methanethiol + O2 + H2O = hydrogen sulfide + formaldehyde + H2O2 + H(+). The protein operates within organosulfur degradation. In terms of biological role, catalyzes the oxidation of methanethiol. The protein is Methanethiol oxidase of Ruegeria pomeroyi (strain ATCC 700808 / DSM 15171 / DSS-3) (Silicibacter pomeroyi).